The primary structure comprises 241 residues: Pyridoxine 5'-phosphate synthase (241 aa).

3-amino-2-oxopropyl phosphate is bound at residue asparagine 7. 9-10 (DH) lines the 1-deoxy-D-xylulose 5-phosphate pocket. Position 18 (arginine 18) interacts with 3-amino-2-oxopropyl phosphate. Histidine 43 serves as the catalytic Proton acceptor. 1-deoxy-D-xylulose 5-phosphate-binding residues include arginine 45 and histidine 50. Glutamate 70 acts as the Proton acceptor in catalysis. Position 100 (threonine 100) interacts with 1-deoxy-D-xylulose 5-phosphate. Catalysis depends on histidine 191, which acts as the Proton donor. 3-amino-2-oxopropyl phosphate contacts are provided by residues glycine 192 and 213–214 (GH).

This sequence belongs to the PNP synthase family. As to quaternary structure, homooctamer; tetramer of dimers.

The protein localises to the cytoplasm. It catalyses the reaction 3-amino-2-oxopropyl phosphate + 1-deoxy-D-xylulose 5-phosphate = pyridoxine 5'-phosphate + phosphate + 2 H2O + H(+). It participates in cofactor biosynthesis; pyridoxine 5'-phosphate biosynthesis; pyridoxine 5'-phosphate from D-erythrose 4-phosphate: step 5/5. Catalyzes the complicated ring closure reaction between the two acyclic compounds 1-deoxy-D-xylulose-5-phosphate (DXP) and 3-amino-2-oxopropyl phosphate (1-amino-acetone-3-phosphate or AAP) to form pyridoxine 5'-phosphate (PNP) and inorganic phosphate. This chain is Pyridoxine 5'-phosphate synthase, found in Nostoc punctiforme (strain ATCC 29133 / PCC 73102).